Consider the following 171-residue polypeptide: Mitoferrin-1 (171 aa).

The segment at 1-40 (MELRRGGVGSQARARRMDGDSRDGGGGCKDAGSEDYENLP) is disordered. Residues 43 to 131 (ASLSTHMTAG…FACYENMKRT (89 aa)) form a Solcar repeat. Transmembrane regions (helical) follow at residues 45–64 (LSTH…SVMY), 105–125 (RGLN…FACY), and 143–163 (HLAN…PSTD).

The protein belongs to the mitochondrial carrier (TC 2.A.29) family. As to quaternary structure, interacts with ACB10; this interaction stabilizes SLC25A37 and enhances the function of SLC25A37 to import mitochondrial iron during erythroid differentiation.

The protein resides in the mitochondrion inner membrane. It carries out the reaction Fe(2+)(in) = Fe(2+)(out). Mitochondrial iron transporter that specifically mediates iron uptake in developing erythroid cells, thereby playing an essential role in heme biosynthesis. The polypeptide is Mitoferrin-1 (SLC25A37) (Bos taurus (Bovine)).